The following is a 124-amino-acid chain: Small ribosomal subunit protein uS12 (124 aa).

A 3-methylthioaspartic acid modification is found at D89. Positions 103–124 (DTAGVKDRRQSRSKYGAKSPKE) are disordered.

This sequence belongs to the universal ribosomal protein uS12 family. Part of the 30S ribosomal subunit. Contacts proteins S8 and S17. May interact with IF1 in the 30S initiation complex.

With S4 and S5 plays an important role in translational accuracy. In terms of biological role, interacts with and stabilizes bases of the 16S rRNA that are involved in tRNA selection in the A site and with the mRNA backbone. Located at the interface of the 30S and 50S subunits, it traverses the body of the 30S subunit contacting proteins on the other side and probably holding the rRNA structure together. The combined cluster of proteins S8, S12 and S17 appears to hold together the shoulder and platform of the 30S subunit. The chain is Small ribosomal subunit protein uS12 from Prochlorococcus marinus (strain NATL2A).